A 313-amino-acid polypeptide reads, in one-letter code: Pantothenate synthetase (313 aa).

An ATP-binding site is contributed by 43–50 (MGALHEGH). Catalysis depends on His50, which acts as the Proton donor. Gln75 lines the (R)-pantoate pocket. Gln75 is a binding site for beta-alanine. ATP is bound at residue 161–164 (GEKD). A (R)-pantoate-binding site is contributed by Gln167. ATP contacts are provided by residues Val190 and 198-201 (LSSR).

This sequence belongs to the pantothenate synthetase family. Homodimer.

The protein localises to the cytoplasm. The catalysed reaction is (R)-pantoate + beta-alanine + ATP = (R)-pantothenate + AMP + diphosphate + H(+). Its pathway is cofactor biosynthesis; (R)-pantothenate biosynthesis; (R)-pantothenate from (R)-pantoate and beta-alanine: step 1/1. Catalyzes the condensation of pantoate with beta-alanine in an ATP-dependent reaction via a pantoyl-adenylate intermediate. This Mycobacterium sp. (strain JLS) protein is Pantothenate synthetase.